The chain runs to 101 residues: uncharacterized protein (101 aa).

The chain crosses the membrane as a helical span at residues 77 to 99 (VFSFMNGFTDGCICGTIIILCLI).

It is found in the membrane. This is an uncharacterized protein from Acanthamoeba polyphaga mimivirus (APMV).